A 355-amino-acid chain; its full sequence is N-acetyl-gamma-glutamyl-phosphate reductase (355 aa).

Residue Cys-152 is part of the active site.

Belongs to the NAGSA dehydrogenase family. Type 1 subfamily.

The protein localises to the cytoplasm. It carries out the reaction N-acetyl-L-glutamate 5-semialdehyde + phosphate + NADP(+) = N-acetyl-L-glutamyl 5-phosphate + NADPH + H(+). Its pathway is amino-acid biosynthesis; L-arginine biosynthesis; N(2)-acetyl-L-ornithine from L-glutamate: step 3/4. Functionally, catalyzes the NADPH-dependent reduction of N-acetyl-5-glutamyl phosphate to yield N-acetyl-L-glutamate 5-semialdehyde. The chain is N-acetyl-gamma-glutamyl-phosphate reductase from Psychrobacter cryohalolentis (strain ATCC BAA-1226 / DSM 17306 / VKM B-2378 / K5).